The chain runs to 1372 residues: DNA-directed RNA polymerase subunit beta' (1372 aa).

Cysteine 69, cysteine 71, cysteine 84, and cysteine 87 together coordinate Zn(2+). The Mg(2+) site is built by aspartate 460, aspartate 462, and aspartate 464. Zn(2+) is bound by residues cysteine 808, cysteine 882, cysteine 889, and cysteine 892.

It belongs to the RNA polymerase beta' chain family. As to quaternary structure, the RNAP catalytic core consists of 2 alpha, 1 beta, 1 beta' and 1 omega subunit. When a sigma factor is associated with the core the holoenzyme is formed, which can initiate transcription. Mg(2+) is required as a cofactor. It depends on Zn(2+) as a cofactor.

The enzyme catalyses RNA(n) + a ribonucleoside 5'-triphosphate = RNA(n+1) + diphosphate. Functionally, DNA-dependent RNA polymerase catalyzes the transcription of DNA into RNA using the four ribonucleoside triphosphates as substrates. The protein is DNA-directed RNA polymerase subunit beta' of Rickettsia rickettsii (strain Iowa).